Here is a 251-residue protein sequence, read N- to C-terminus: Methionine aminopeptidase (251 aa).

Histidine 76 is a substrate binding site. A divalent metal cation is bound by residues aspartate 93, aspartate 104, and histidine 168. Residue histidine 175 coordinates substrate. Residues glutamate 202 and glutamate 233 each contribute to the a divalent metal cation site.

Belongs to the peptidase M24A family. Methionine aminopeptidase type 1 subfamily. As to quaternary structure, monomer. Co(2+) is required as a cofactor. Requires Zn(2+) as cofactor. Mn(2+) serves as cofactor. It depends on Fe(2+) as a cofactor.

It carries out the reaction Release of N-terminal amino acids, preferentially methionine, from peptides and arylamides.. Its function is as follows. Removes the N-terminal methionine from nascent proteins. The N-terminal methionine is often cleaved when the second residue in the primary sequence is small and uncharged (Met-Ala-, Cys, Gly, Pro, Ser, Thr, or Val). Requires deformylation of the N(alpha)-formylated initiator methionine before it can be hydrolyzed. The protein is Methionine aminopeptidase of Staphylococcus epidermidis (strain ATCC 12228 / FDA PCI 1200).